The sequence spans 439 residues: Taxadien-5-alpha-ol O-acetyltransferase (439 aa).

Residues H164 and D373 each act as proton acceptor in the active site.

The protein belongs to the plant acyltransferase family.

The catalysed reaction is taxa-4(20),11-dien-5alpha-ol + acetyl-CoA = taxa-4(20),11-dien-5alpha-yl acetate + CoA. It functions in the pathway alkaloid biosynthesis; taxol biosynthesis; 10-deacetyl-2-debenzoylbaccatin III from taxa-4(20),11-dien-5alpha-ol: step 1/3. The sequence is that of Taxadien-5-alpha-ol O-acetyltransferase from Taxus chinensis (Chinese yew).